The chain runs to 767 residues: Polyribonucleotide nucleotidyltransferase (767 aa).

Residues D509 and D515 each coordinate Mg(2+). Positions 575 to 634 (PRILTVKVPIDKIGEVIGPKGKMINSIQDETGAEITIEDDGTIYIGATDGPSAEAARDAI) constitute a KH domain. The S1 motif domain occupies 646-718 (GERYLGTVVK…ERGKLSLVPV (73 aa)). The disordered stretch occupies residues 725-767 (AVAAPNGGESPNGAKKTDASGNGAKQPRRRRRTRSSSRSSENT). Basic residues predominate over residues 750–759 (QPRRRRRTRS).

This sequence belongs to the polyribonucleotide nucleotidyltransferase family. Mg(2+) is required as a cofactor.

It is found in the cytoplasm. It catalyses the reaction RNA(n+1) + phosphate = RNA(n) + a ribonucleoside 5'-diphosphate. In terms of biological role, involved in mRNA degradation. Catalyzes the phosphorolysis of single-stranded polyribonucleotides processively in the 3'- to 5'-direction. The protein is Polyribonucleotide nucleotidyltransferase of Thermobifida fusca (strain YX).